The following is a 1199-amino-acid chain: DNA-directed RNA polymerase subunit beta' (1199 aa).

The Zn(2+) site is built by Cys-60, Cys-62, Cys-75, and Cys-78. Residues Asp-449, Asp-451, and Asp-453 each contribute to the Mg(2+) site. 4 residues coordinate Zn(2+): Cys-818, Cys-892, Cys-899, and Cys-902.

The protein belongs to the RNA polymerase beta' chain family. The RNAP catalytic core consists of 2 alpha, 1 beta, 1 beta' and 1 omega subunit. When a sigma factor is associated with the core the holoenzyme is formed, which can initiate transcription. Requires Mg(2+) as cofactor. Zn(2+) serves as cofactor.

The catalysed reaction is RNA(n) + a ribonucleoside 5'-triphosphate = RNA(n+1) + diphosphate. DNA-dependent RNA polymerase catalyzes the transcription of DNA into RNA using the four ribonucleoside triphosphates as substrates. This Bacillus licheniformis (strain ATCC 14580 / DSM 13 / JCM 2505 / CCUG 7422 / NBRC 12200 / NCIMB 9375 / NCTC 10341 / NRRL NRS-1264 / Gibson 46) protein is DNA-directed RNA polymerase subunit beta'.